Reading from the N-terminus, the 597-residue chain is MNKAFIVVAVVLLILGIISFNLVFIILAIISLFFVDPQIMRKFYKFFLKSNISKIFVKNYKTNHSIVIEDGYLKIEDNVKAFLIVDDIPFDYRDLSDESLRVKISSFHKVLDIAGQIDIVFRKSSIDKNKFLSDLFQKAQNIRVIIDADPSNERAKNELMMIQHMIKKISEGEMPFKYLIFFIINSDSKEKALATADVVKKGLESIGVKSRLAYKHEIEDLLNDKLSLKKIVFPSQIPFLSVFSLQKQPDYEIITDGIYLGQEINDRRAVFWNVNRVINPHALIIGPTGSGKTEFLLSLGVKTNILYGIPIVFFDVKKDISLRLKKYGYKYKYINPLLNSINLLKFSNVNKDIYLIQLENIIRNSFKLDRFVSALLYRILLESISDNYYEVSWDYIIDKIEKYDINEDVKAYLLRIVSAIKSLDAGVEDIDLISAISEGINVVDLSSIKSEELRRLVMYGIIIKFINKYNIADDRLKLVLVIDEAWTLLRSEDRDYQIVADLIKRGRGFGIGIFMATQNFDDLGELSDIFLENIGLLGFMNNGDKKFWNEVMRFADLNIEETLRSLIFLGKGEMLIRFINDPRPIMIKTDVLVRNSF.

The helical transmembrane segment at 10 to 30 (VVLLILGIISFNLVFIILAII) threads the bilayer. ATP is bound at residue 286 to 293 (GPTGSGKT).

Its subcellular location is the cell membrane. In terms of biological role, part of the Ced system, which is involved in DNA import. The protein is DNA import protein CedB of Sulfolobus acidocaldarius (strain ATCC 33909 / DSM 639 / JCM 8929 / NBRC 15157 / NCIMB 11770).